Consider the following 231-residue polypeptide: Ribose-5-phosphate isomerase A (231 aa).

Substrate-binding positions include 32–35 (TGST), 85–88 (DGAD), and 98–101 (KGGG). The active-site Proton acceptor is glutamate 107. Residue lysine 125 participates in substrate binding.

Belongs to the ribose 5-phosphate isomerase family. As to quaternary structure, homodimer.

It carries out the reaction aldehydo-D-ribose 5-phosphate = D-ribulose 5-phosphate. It functions in the pathway carbohydrate degradation; pentose phosphate pathway; D-ribose 5-phosphate from D-ribulose 5-phosphate (non-oxidative stage): step 1/1. In terms of biological role, catalyzes the reversible conversion of ribose-5-phosphate to ribulose 5-phosphate. The protein is Ribose-5-phosphate isomerase A of Paraburkholderia phymatum (strain DSM 17167 / CIP 108236 / LMG 21445 / STM815) (Burkholderia phymatum).